The sequence spans 134 residues: Profilin-1 (134 aa).

C13 and C118 are disulfide-bonded. Positions 84–100 (AVIRGKKGSGGITIKKT) match the Involved in PIP2 interaction motif. T114 carries the post-translational modification Phosphothreonine.

It belongs to the profilin family. Occurs in many kinds of cells as a complex with monomeric actin in a 1:1 ratio. Post-translationally, phosphorylated by MAP kinases.

It is found in the cytoplasm. The protein localises to the cytoskeleton. Functionally, binds to actin and affects the structure of the cytoskeleton. At high concentrations, profilin prevents the polymerization of actin, whereas it enhances it at low concentrations. The chain is Profilin-1 from Olea europaea (Common olive).